The sequence spans 485 residues: WAS/WASL-interacting protein family member 3 (485 aa).

Residues 1-30 (MPVPPPPPPPLPPPPPPLGAPPPPPPPGPP) show a composition bias toward pro residues. A disordered region spans residues 1–485 (MPVPPPPPPP…NSQLSLKALR (485 aa)). Short sequence motifs (profilin-binding motif) lie at residues 3–8 (VPPPPP), 11–16 (LPPPPP), and 20–25 (APPPPP). The WH2 domain maps to 45–62 (GRSALLADIQQGTRLRKV). Residue arginine 46 is modified to Asymmetric dimethylarginine. Positions 58–61 (RLRK) match the RLRK motif. Over residues 63–78 (TQINDRSAPQIESSKG) the composition is skewed to polar residues. Phosphoserine is present on serine 150. 2 stretches are compositionally biased toward pro residues: residues 165 to 200 (PVPP…PPAS) and 207 to 243 (VSPP…PLPP). Serine 208 is modified (phosphoserine). Residues 244–259 (ASALSEKAVRPQLAPL) are compositionally biased toward low complexity. 2 stretches are compositionally biased toward pro residues: residues 260-275 (HLPP…PPYG) and 293-312 (PPAP…PPLP). Serine 394 bears the Phosphoserine mark. The span at 396 to 407 (TTELSSKTQQPG) shows a compositional bias: polar residues. Positions 417–441 (VIDDFESKFTFHSMEDFPPPDEYKP) are enriched in basic and acidic residues. Residues 426-450 (TFHSMEDFPPPDEYKPGQKIYPSKV) carry the WASP-binding motif motif. Over residues 475 to 485 (RNSQLSLKALR) the composition is skewed to polar residues.

It belongs to the verprolin family. Isoform 1 interacts with WASL (via WH1 domain), and monomeric and filamentous actin. As to expression, detected mainly in brain and at lower levels in heart and lung (at protein level). Also detected in testis but not in kidney, liver or spleen.

It localises to the cytoplasm. Its function is as follows. May have a role in spermatogenesis. May be a regulator of cytoskeletal organization. The polypeptide is WAS/WASL-interacting protein family member 3 (Wipf3) (Rattus norvegicus (Rat)).